Reading from the N-terminus, the 803-residue chain is Ribonucleoside-diphosphate reductase large chain (803 aa).

An ATP-cone domain is found at 1-91 (MYVVNRKGEE…TSNLHKNTSS (91 aa)). ATP contacts are provided by residues 5–6 (NR), 11–17 (EPVSFDQ), Thr-52, and Asp-56. Ser-215 is a GDP binding site. Cys-216 and Cys-442 are oxidised to a cystine. DTTP is bound by residues 224–226 (DSI), Lys-241, Arg-254, and 261–262 (RG). GDP is bound at residue Asn-425. Residue Asn-425 is the Proton acceptor of the active site. Residue Cys-427 is the Cysteine radical intermediate of the active site. Residues Glu-429 and 604–607 (TAST) contribute to the GDP site. Glu-429 functions as the Proton acceptor in the catalytic mechanism.

The protein belongs to the ribonucleoside diphosphate reductase large chain family. As to quaternary structure, heterodimer of a large and a small subunit.

It catalyses the reaction a 2'-deoxyribonucleoside 5'-diphosphate + [thioredoxin]-disulfide + H2O = a ribonucleoside 5'-diphosphate + [thioredoxin]-dithiol. Under complex allosteric control mediated by deoxynucleoside triphosphates and ATP binding to separate specificity and activation sites on the large subunit. The type of nucleotide bound at the specificity site determines substrate preference. It seems probable that ATP makes the enzyme reduce CDP and UDP, dGTP favors ADP reduction and dTTP favors GDP reduction. Stimulated by ATP and inhibited by dATP binding to the activity site. Its function is as follows. Provides the precursors necessary for DNA synthesis. Catalyzes the biosynthesis of deoxyribonucleotides from the corresponding ribonucleotides. In Cryptosporidium parvum, this protein is Ribonucleoside-diphosphate reductase large chain (RNR1).